Here is a 250-residue protein sequence, read N- to C-terminus: Sugar fermentation stimulation protein homolog (250 aa).

The protein belongs to the SfsA family.

The protein is Sugar fermentation stimulation protein homolog of Trichodesmium erythraeum (strain IMS101).